The primary structure comprises 489 residues: 3-octaprenyl-4-hydroxybenzoate carboxy-lyase (489 aa).

A Mn(2+)-binding site is contributed by N172. Prenylated FMN-binding positions include 175–177 (IYR), 189–191 (RWL), and 194–195 (RG). E238 is a Mn(2+) binding site. The Proton donor role is filled by D287.

Belongs to the UbiD family. Homohexamer. The cofactor is prenylated FMN. Mn(2+) serves as cofactor.

Its subcellular location is the cell membrane. The enzyme catalyses a 4-hydroxy-3-(all-trans-polyprenyl)benzoate + H(+) = a 2-(all-trans-polyprenyl)phenol + CO2. The protein operates within cofactor biosynthesis; ubiquinone biosynthesis. Functionally, catalyzes the decarboxylation of 3-octaprenyl-4-hydroxy benzoate to 2-octaprenylphenol, an intermediate step in ubiquinone biosynthesis. In Salmonella arizonae (strain ATCC BAA-731 / CDC346-86 / RSK2980), this protein is 3-octaprenyl-4-hydroxybenzoate carboxy-lyase.